Here is a 185-residue protein sequence, read N- to C-terminus: Dihydrofolate reductase 1 (185 aa).

The 178-residue stretch at 8–185 (ELVLVVAADE…QASPRPLDDL (178 aa)) folds into the DHFR domain.

It belongs to the dihydrofolate reductase family.

The catalysed reaction is (6S)-5,6,7,8-tetrahydrofolate + NADP(+) = 7,8-dihydrofolate + NADPH + H(+). It functions in the pathway cofactor biosynthesis; tetrahydrofolate biosynthesis; 5,6,7,8-tetrahydrofolate from 7,8-dihydrofolate: step 1/1. Key enzyme in folate metabolism. Catalyzes an essential reaction for de novo glycine and purine synthesis, and for DNA precursor synthesis. The polypeptide is Dihydrofolate reductase 1 (folA1) (Haloarcula marismortui (strain ATCC 43049 / DSM 3752 / JCM 8966 / VKM B-1809) (Halobacterium marismortui)).